Reading from the N-terminus, the 127-residue chain is Fluoride-specific ion channel FluC (127 aa).

Transmembrane regions (helical) follow at residues 4–24 (LLLA…LLSM), 35–55 (LGTL…FAWF), 71–91 (TGFC…VFLL), and 103–123 (VFVN…LFSA). Na(+) contacts are provided by glycine 75 and threonine 78.

The protein belongs to the fluoride channel Fluc/FEX (TC 1.A.43) family.

The protein localises to the cell inner membrane. The enzyme catalyses fluoride(in) = fluoride(out). Na(+) is not transported, but it plays an essential structural role and its presence is essential for fluoride channel function. Its function is as follows. Fluoride-specific ion channel. Important for reducing fluoride concentration in the cell, thus reducing its toxicity. The chain is Fluoride-specific ion channel FluC from Escherichia coli O8 (strain IAI1).